The following is an 80-amino-acid chain: Exodeoxyribonuclease 7 small subunit (80 aa).

A disordered region spans residues 60–80; that stretch reads LIDSDGTEHNLDPNNASAPEE. Over residues 61–70 the composition is skewed to basic and acidic residues; sequence IDSDGTEHNL. Residues 71–80 show a composition bias toward polar residues; sequence DPNNASAPEE.

Belongs to the XseB family. In terms of assembly, heterooligomer composed of large and small subunits.

Its subcellular location is the cytoplasm. It catalyses the reaction Exonucleolytic cleavage in either 5'- to 3'- or 3'- to 5'-direction to yield nucleoside 5'-phosphates.. Functionally, bidirectionally degrades single-stranded DNA into large acid-insoluble oligonucleotides, which are then degraded further into small acid-soluble oligonucleotides. In Lactobacillus acidophilus (strain ATCC 700396 / NCK56 / N2 / NCFM), this protein is Exodeoxyribonuclease 7 small subunit.